The following is a 350-amino-acid chain: Aldo-keto reductase 1B (350 aa).

Catalysis depends on Tyr84, which acts as the Proton donor. Position 146 (His146) interacts with substrate. 244 to 306 (SPLGSPNRPW…SVTKDRIESN (63 aa)) contributes to the NADP(+) binding site.

This sequence belongs to the aldo/keto reductase family.

Its subcellular location is the cytoplasm. The enzyme catalyses an alditol + NADP(+) = an aldose + NADPH + H(+). It carries out the reaction all-trans-retinol + NADP(+) = all-trans-retinal + NADPH + H(+). It catalyses the reaction 9-cis-retinol + NADP(+) = 9-cis-retinal + NADPH + H(+). The catalysed reaction is 13-cis-retinol + NADP(+) = 13-cis-retinal + NADPH + H(+). The enzyme catalyses glycerol + NADP(+) = D-glyceraldehyde + NADPH + H(+). It carries out the reaction glycerol + NADP(+) = L-glyceraldehyde + NADPH + H(+). It catalyses the reaction prenol + NADP(+) = 3-methyl-2-butenal + NADPH + H(+). The catalysed reaction is (E)-hex-2-en-1-ol + NADP(+) = (E)-hex-2-enal + NADPH + H(+). The enzyme catalyses (E,E)-2,4-hexadien-1-ol + NADP(+) = (E,E)-2,4-hexadienal + NADPH + H(+). It carries out the reaction a 4-hydroxynonen-1-ol + NADP(+) = a 4-hydroxynonenal + NADPH + H(+). It catalyses the reaction prostaglandin F2alpha + NADP(+) = prostaglandin H2 + NADPH + H(+). The catalysed reaction is allyl alcohol + NADP(+) = acrolein + NADPH + H(+). The enzyme catalyses pyridine 3-methanol + NADP(+) = pyridine-3-carbaldehyde + NADPH + H(+). It carries out the reaction 1-hexadecanoyl-2-(5-oxopentanoyl)-sn-glycero-3-phosphocholine + NADPH + H(+) = 1-hexadecanoyl-2-(5-hydroxypentanoyl)-sn-glycero-3-phosphocholine + NADP(+). It catalyses the reaction 1-hexadecanoyl-2-(7-oxoheptanoyl)-sn-glycero-3-phosphocholine + NADPH + H(+) = 1-hexadecanoyl-2-(7-hydroxyheptanoyl)-sn-glycero-3-phosphocholine + NADP(+). The catalysed reaction is 1-hexadecanoyl-2-(9-oxononanoyl)-sn-glycero-3-phosphocholine + NADPH + H(+) = 1-hexadecanoyl-2-(9-hydroxynonanoyl)-sn-glycero-3-phosphocholine + NADP(+). The enzyme catalyses 1-hexadecanoyl-2-(5-oxopentanoyl)-sn-glycero-3-phosphoethanolamine + NADPH + H(+) = 1-hexadecanoyl-2-(5-hydroxypentanoyl)-sn-glycero-3-phosphoethanolamine + NADP(+). In terms of biological role, catalyzes the NADPH-dependent reduction of a wide variety of carbonyl-containing compounds to their corresponding alcohols. Displays enzymatic activity towards endogenous metabolites such as aromatic and aliphatic aldehydes, ketones, monosaccharides, bile acids and xenobiotics substrates. Key enzyme in the polyol pathway, catalyzes reduction of glucose to sorbitol during hyperglycemia. Reduces steroids and their derivatives and prostaglandins. Through production of prostaglandin F2alpha may regulate the activity of non-muscle myosin II in an autocrine or paracrine fashion; influences border cell and nurse cell stiffness to facilitate border cell cluster migration. Also regulates the cell surface localization of integrins in an autocrine or paracrine fashion; influences border cell adhesion to maintain border cell cluster morphology. In hemocytes, probably contributes to production of sugar alcohols in the hemolymph, which act as alarmins involved in gut-fat body innate immunological communication (GFIC); leads to activation of the imd/Relish signaling pathway in the fat body. The polypeptide is Aldo-keto reductase 1B (Drosophila melanogaster (Fruit fly)).